We begin with the raw amino-acid sequence, 499 residues long: Lysine--tRNA ligase (499 aa).

Positions 410 and 417 each coordinate Mg(2+).

This sequence belongs to the class-II aminoacyl-tRNA synthetase family. As to quaternary structure, homodimer. The cofactor is Mg(2+).

It is found in the cytoplasm. It carries out the reaction tRNA(Lys) + L-lysine + ATP = L-lysyl-tRNA(Lys) + AMP + diphosphate. In Bacillus subtilis (strain 168), this protein is Lysine--tRNA ligase (lysS).